Here is a 23-residue protein sequence, read N- to C-terminus: Septenin 2d (23 aa).

In terms of tissue distribution, expressed in skin glands.

The protein resides in the secreted. Its function is as follows. May act as an antimicrobial peptide. The polypeptide is Septenin 2d (Osteopilus septentrionalis (Cuban treefrog)).